A 286-amino-acid polypeptide reads, in one-letter code: Ribosomal RNA small subunit methyltransferase A (286 aa).

Positions 33, 35, 60, 81, 111, and 129 each coordinate S-adenosyl-L-methionine.

This sequence belongs to the class I-like SAM-binding methyltransferase superfamily. rRNA adenine N(6)-methyltransferase family. RsmA subfamily.

It localises to the cytoplasm. It catalyses the reaction adenosine(1518)/adenosine(1519) in 16S rRNA + 4 S-adenosyl-L-methionine = N(6)-dimethyladenosine(1518)/N(6)-dimethyladenosine(1519) in 16S rRNA + 4 S-adenosyl-L-homocysteine + 4 H(+). Functionally, specifically dimethylates two adjacent adenosines (A1518 and A1519) in the loop of a conserved hairpin near the 3'-end of 16S rRNA in the 30S particle. May play a critical role in biogenesis of 30S subunits. The sequence is that of Ribosomal RNA small subunit methyltransferase A from Streptomyces coelicolor (strain ATCC BAA-471 / A3(2) / M145).